A 472-amino-acid chain; its full sequence is Argininosuccinate lyase (472 aa).

It belongs to the lyase 1 family. Argininosuccinate lyase subfamily.

It localises to the cytoplasm. It carries out the reaction 2-(N(omega)-L-arginino)succinate = fumarate + L-arginine. Its pathway is amino-acid biosynthesis; L-arginine biosynthesis; L-arginine from L-ornithine and carbamoyl phosphate: step 3/3. This Synechococcus sp. (strain CC9311) protein is Argininosuccinate lyase.